The following is a 389-amino-acid chain: Probable acyl-CoA dehydrogenase fadE25 (389 aa).

It belongs to the acyl-CoA dehydrogenase family. Requires FAD as cofactor.

It carries out the reaction a 2,3-saturated acyl-CoA + A = a 2,3-dehydroacyl-CoA + AH2. The chain is Probable acyl-CoA dehydrogenase fadE25 (fadE25) from Mycobacterium bovis (strain ATCC BAA-935 / AF2122/97).